A 353-amino-acid polypeptide reads, in one-letter code: Photosystem II protein D1 (353 aa).

Thr-2 is modified (N-acetylthreonine). Phosphothreonine is present on Thr-2. 3 consecutive transmembrane segments (helical) span residues 29 to 46 (YIGW…TATS), 118 to 133 (HFLL…EWEL), and 142 to 156 (WIAV…AATA). His-118 serves as a coordination point for chlorophyll a. Residue Tyr-126 coordinates pheophytin a. 2 residues coordinate [CaMn4O5] cluster: Asp-170 and Glu-189. Residues 197 to 218 (FHMLGVAGVFGGSLFSAMHGSL) form a helical membrane-spanning segment. His-198 serves as a coordination point for chlorophyll a. Residues His-215 and 264–265 (SF) each bind a quinone. His-215 contributes to the Fe cation binding site. His-272 serves as a coordination point for Fe cation. Residues 274–288 (FLAAWPVVGIWFTAL) traverse the membrane as a helical segment. 4 residues coordinate [CaMn4O5] cluster: His-332, Glu-333, Asp-342, and Ala-344. Residues 345-353 (AVEAPSING) constitute a propeptide that is removed on maturation.

Belongs to the reaction center PufL/M/PsbA/D family. In terms of assembly, PSII is composed of 1 copy each of membrane proteins PsbA, PsbB, PsbC, PsbD, PsbE, PsbF, PsbH, PsbI, PsbJ, PsbK, PsbL, PsbM, PsbT, PsbX, PsbY, PsbZ, Psb30/Ycf12, at least 3 peripheral proteins of the oxygen-evolving complex and a large number of cofactors. It forms dimeric complexes. The D1/D2 heterodimer binds P680, chlorophylls that are the primary electron donor of PSII, and subsequent electron acceptors. It shares a non-heme iron and each subunit binds pheophytin, quinone, additional chlorophylls, carotenoids and lipids. D1 provides most of the ligands for the Mn4-Ca-O5 cluster of the oxygen-evolving complex (OEC). There is also a Cl(-1) ion associated with D1 and D2, which is required for oxygen evolution. The PSII complex binds additional chlorophylls, carotenoids and specific lipids. serves as cofactor. Post-translationally, tyr-161 forms a radical intermediate that is referred to as redox-active TyrZ, YZ or Y-Z. In terms of processing, C-terminally processed by CTPA; processing is essential to allow assembly of the oxygen-evolving complex and thus photosynthetic growth.

Its subcellular location is the plastid. It is found in the chloroplast thylakoid membrane. It carries out the reaction 2 a plastoquinone + 4 hnu + 2 H2O = 2 a plastoquinol + O2. Photosystem II (PSII) is a light-driven water:plastoquinone oxidoreductase that uses light energy to abstract electrons from H(2)O, generating O(2) and a proton gradient subsequently used for ATP formation. It consists of a core antenna complex that captures photons, and an electron transfer chain that converts photonic excitation into a charge separation. The D1/D2 (PsbA/PsbD) reaction center heterodimer binds P680, the primary electron donor of PSII as well as several subsequent electron acceptors. The sequence is that of Photosystem II protein D1 from Illicium oligandrum (Star anise).